A 387-amino-acid polypeptide reads, in one-letter code: Succinate--CoA ligase [ADP-forming] subunit beta (387 aa).

The region spanning 9–236 (KELFAKHNVP…RAATDPLELK (228 aa)) is the ATP-grasp domain. ATP contacts are provided by residues Lys-45, 52–54 (GRG), Ser-94, and Glu-99. Mg(2+) is bound by residues Asn-191 and Asp-205. Residues Asn-256 and 318-320 (GIT) contribute to the substrate site.

Belongs to the succinate/malate CoA ligase beta subunit family. In terms of assembly, heterotetramer of two alpha and two beta subunits. Mg(2+) serves as cofactor.

The enzyme catalyses succinate + ATP + CoA = succinyl-CoA + ADP + phosphate. It catalyses the reaction GTP + succinate + CoA = succinyl-CoA + GDP + phosphate. The protein operates within carbohydrate metabolism; tricarboxylic acid cycle; succinate from succinyl-CoA (ligase route): step 1/1. Functionally, succinyl-CoA synthetase functions in the citric acid cycle (TCA), coupling the hydrolysis of succinyl-CoA to the synthesis of either ATP or GTP and thus represents the only step of substrate-level phosphorylation in the TCA. The beta subunit provides nucleotide specificity of the enzyme and binds the substrate succinate, while the binding sites for coenzyme A and phosphate are found in the alpha subunit. The protein is Succinate--CoA ligase [ADP-forming] subunit beta of Mycobacterium marinum (strain ATCC BAA-535 / M).